We begin with the raw amino-acid sequence, 351 residues long: Rhodopsin (351 aa).

At 1–36 (MNGTEGPFFYIPMVNTTGIVRSPYEYPQYYLVNPAA) the chain is on the extracellular side. N-linked (GlcNAc...) asparagine glycans are attached at residues Asn-2 and Asn-15. The chain crosses the membrane as a helical span at residues 37–61 (YAILGAYMFFLIIVGFPVNFMTLYV). Topologically, residues 62–73 (TLEHKKLRTPLN) are cytoplasmic. Residues 74–96 (YILLNLAVADLFMVIGGFTTTMY) form a helical membrane-spanning segment. The Extracellular portion of the chain corresponds to 97 to 110 (TSMHGYFVLGRLGC). Cys-110 and Cys-187 are joined by a disulfide. A helical transmembrane segment spans residues 111–133 (NLEGFFATLGGMISLWSLAVLAI). The 'Ionic lock' involved in activated form stabilization signature appears at 134 to 136 (ERW). The Cytoplasmic segment spans residues 134-152 (ERWVVVCKPISNFRFGENH). A helical membrane pass occupies residues 153–173 (AIMGVSLTWGMALACTVPPLV). Topologically, residues 174–202 (GWSRYIPEGMQCSCGIDYYTRAEGFNNES) are extracellular. Residue Asn-200 is glycosylated (N-linked (GlcNAc...) asparagine). Residues 203–224 (FVLYMFFCHFTIPLTIIFFCYG) traverse the membrane as a helical segment. Topologically, residues 225-252 (RLLCAVKEAAAAQQESETTQRAEREVTR) are cytoplasmic. A helical membrane pass occupies residues 253–274 (MVIIMVIGFLVCWLPYASVAWF). Over 275–286 (IFTHQGSEFGPL) the chain is Extracellular. Residues 287–308 (FMTIPAFFAKSSSIYNPMIYIC) form a helical membrane-spanning segment. Lys-296 is subject to N6-(retinylidene)lysine. Topologically, residues 309–351 (MNKQFRHCMITTLFCGKNPFEGEEEGASSTKTEASSASSVSPA) are cytoplasmic. The S-palmitoyl cysteine moiety is linked to residue Cys-323. The tract at residues 330 to 351 (GEEEGASSTKTEASSASSVSPA) is disordered. Positions 335–351 (ASSTKTEASSASSVSPA) are enriched in low complexity.

This sequence belongs to the G-protein coupled receptor 1 family. Opsin subfamily. In terms of processing, phosphorylated on some or all of the serine and threonine residues present in the C-terminal region. Post-translationally, contains one covalently linked retinal chromophore.

The protein resides in the membrane. The protein localises to the cell projection. It localises to the cilium. Its subcellular location is the photoreceptor outer segment. Its function is as follows. Photoreceptor required for image-forming vision at low light intensity. While most salt water fish species use retinal as chromophore, most freshwater fish use 3-dehydroretinal, or a mixture of retinal and 3-dehydroretinal. Light-induced isomerization of 11-cis to all-trans retinal triggers a conformational change that activates signaling via G-proteins. Subsequent receptor phosphorylation mediates displacement of the bound G-protein alpha subunit by arrestin and terminates signaling. In Sargocentron diadema (Crown squirrelfish), this protein is Rhodopsin (rho).